The following is a 109-amino-acid chain: ATP-dependent Clp protease adapter protein ClpS 2 (109 aa).

The segment at 1 to 24 (MAGDGGRSGPSTPSTSVITKTKPR) is disordered.

The protein belongs to the ClpS family. Binds to the N-terminal domain of the chaperone ClpA.

In terms of biological role, involved in the modulation of the specificity of the ClpAP-mediated ATP-dependent protein degradation. The sequence is that of ATP-dependent Clp protease adapter protein ClpS 2 from Rhodopseudomonas palustris (strain ATCC BAA-98 / CGA009).